We begin with the raw amino-acid sequence, 564 residues long: Membrane protein insertase YidC (564 aa).

A helical transmembrane segment spans residues 7 to 24 (VLWVVFSFSLLMLWDNYN). A compositionally biased stretch (low complexity) spans 43–60 (KPAAATDDGKTAAAPTAD). Residues 43–76 (KPAAATDDGKTAAAPTADVPTSSAHAANATGVPD) are disordered. The next 6 helical transmembrane spans lie at 293–313 (LATNLYAVGAIMPMGAVAPGA), 341–361 (VKDYGWLTIIAKPIFWLMIQI), 364–384 (LLGNWGWTIVVLTIVIKLAFF), 438–458 (MPIVIQIPVFISLYWVLLASV), 483–503 (IGSFHLTIGILPILMAISMFI), and 524–544 (PIAFSLMFFFFPAGLVLYWVV).

It belongs to the OXA1/ALB3/YidC family. Type 1 subfamily. As to quaternary structure, interacts with the Sec translocase complex via SecD. Specifically interacts with transmembrane segments of nascent integral membrane proteins during membrane integration.

It is found in the cell inner membrane. In terms of biological role, required for the insertion and/or proper folding and/or complex formation of integral membrane proteins into the membrane. Involved in integration of membrane proteins that insert both dependently and independently of the Sec translocase complex, as well as at least some lipoproteins. Aids folding of multispanning membrane proteins. In Janthinobacterium sp. (strain Marseille) (Minibacterium massiliensis), this protein is Membrane protein insertase YidC.